A 220-amino-acid polypeptide reads, in one-letter code: Ribose-5-phosphate isomerase A (220 aa).

Residues 25–28, 80–83, and 93–96 each bind substrate; these read TGST, DGAD, and KGGG. The active-site Proton acceptor is the glutamate 102. Lysine 120 contributes to the substrate binding site.

The protein belongs to the ribose 5-phosphate isomerase family. As to quaternary structure, homodimer.

It catalyses the reaction aldehydo-D-ribose 5-phosphate = D-ribulose 5-phosphate. The protein operates within carbohydrate degradation; pentose phosphate pathway; D-ribose 5-phosphate from D-ribulose 5-phosphate (non-oxidative stage): step 1/1. Its function is as follows. Catalyzes the reversible conversion of ribose-5-phosphate to ribulose 5-phosphate. In Bacillus anthracis, this protein is Ribose-5-phosphate isomerase A.